The primary structure comprises 750 residues: Photosystem I P700 chlorophyll a apoprotein A1 (750 aa).

8 helical membrane passes run 72–95 (VFSAHFGQLAVIFIWLSGMYFHGA), 158–181 (LYSTAIGGLVMAGLMLFAGWFHYH), 197–221 (LNHHLAGLLGLGSLSWAGHQIHVSL), 293–311 (TAHHHLAIAVLFLVAGHMY), 348–371 (WHAQLAINLALFGSLSIIVAHHMY), 387–413 (LSIFTHHTWIGGFCIVGGAAHAAIFMV), 435–457 (AIISHLNWVCIFLGFHSFGLYIH), and 532–550 (FLVHHIHAFTIHVTVLILL). The [4Fe-4S] cluster site is built by cysteine 574 and cysteine 583. A run of 2 helical transmembrane segments spans residues 590–611 (HVFLGLFWMYNSLSIAIFHFSW) and 664–686 (LSAYGLMFLGAHFVWAFSLMFLF). Histidine 675 contributes to the chlorophyll a' binding site. Positions 683 and 691 each coordinate chlorophyll a. Residue tryptophan 692 participates in phylloquinone binding. The chain crosses the membrane as a helical span at residues 724 to 744 (AVGVAHYLLGGIATTWAFFLA).

The protein belongs to the PsaA/PsaB family. As to quaternary structure, the PsaA/B heterodimer binds the P700 chlorophyll special pair and subsequent electron acceptors. PSI consists of a core antenna complex that captures photons, and an electron transfer chain that converts photonic excitation into a charge separation. The eukaryotic PSI reaction center is composed of at least 11 subunits. P700 is a chlorophyll a/chlorophyll a' dimer, A0 is one or more chlorophyll a, A1 is one or both phylloquinones and FX is a shared 4Fe-4S iron-sulfur center. is required as a cofactor.

Its subcellular location is the plastid. The protein resides in the chloroplast thylakoid membrane. The catalysed reaction is reduced [plastocyanin] + hnu + oxidized [2Fe-2S]-[ferredoxin] = oxidized [plastocyanin] + reduced [2Fe-2S]-[ferredoxin]. In terms of biological role, psaA and PsaB bind P700, the primary electron donor of photosystem I (PSI), as well as the electron acceptors A0, A1 and FX. PSI is a plastocyanin-ferredoxin oxidoreductase, converting photonic excitation into a charge separation, which transfers an electron from the donor P700 chlorophyll pair to the spectroscopically characterized acceptors A0, A1, FX, FA and FB in turn. Oxidized P700 is reduced on the lumenal side of the thylakoid membrane by plastocyanin. This chain is Photosystem I P700 chlorophyll a apoprotein A1, found in Chlorokybus atmophyticus (Soil alga).